The primary structure comprises 106 residues: Probable insulin-like peptide beta-type 2 (106 aa).

The signal sequence occupies residues 1–15 (MNAIIFCLLFTTVTA). A propeptide spanning residues 16 to 56 (TYEVFGKGIEHRNEHLIINQLDIIPVESTPTPNRASRVQKR) is cleaved from the precursor. 4 disulfides stabilise this stretch: Cys58-Cys86, Cys70-Cys99, Cys73-Cys100, and Cys85-Cys90.

Belongs to the insulin family.

It is found in the secreted. The chain is Probable insulin-like peptide beta-type 2 (ins-2) from Caenorhabditis elegans.